The following is a 281-amino-acid chain: Aquaporin-9 (281 aa).

At 1-17 the chain is on the cytoplasmic side; that stretch reads MGAFVNTKVYIENKNIR. A helical transmembrane segment spans residues 18–36; sequence DWLSEALSMFMYMSLLLGS. The Extracellular segment spans residues 37–50; sequence AATGHFSGREDDAL. Residues 51-69 traverse the membrane as a helical segment; the sequence is FGVIFQGFSITFGIYIGGA. The Cytoplasmic segment spans residues 70–71; sequence MS. Residues 72–84 constitute an intramembrane region (discontinuously helical); sequence GAIINPALTLAVA. The NPA 1 signature appears at 76–78; it reads NPA. Residues 85–90 lie on the Cytoplasmic side of the membrane; it reads LLGKIS. Residues 91 to 115 traverse the membrane as a helical segment; it reads WRKCIVLQSAQYIGSFIASAVVYLI. Over 116 to 157 the chain is Extracellular; it reads YNDSLDAFGAGANFTATEPGVFRKDVAGIWSTFPKTYLKERG. 2 N-linked (GlcNAc...) asparagine glycosylation sites follow: asparagine 117 and asparagine 128. Residues 158-175 traverse the membrane as a helical segment; that stretch reads AIFNQIFCSMLLTFGFLA. Over 176–187 the chain is Cytoplasmic; the sequence is ISDYKNFRPSKG. Residues 188-204 traverse the membrane as a helical segment; it reads LFPIAVGLLVMTVFLAF. Residues 205 to 207 are Extracellular-facing; it reads SYS. The segment at residues 208–222 is an intramembrane region (discontinuously helical); sequence TGAAMNPARDFSPRL. An NPA 2 motif is present at residues 213–215; the sequence is NPA. The Extracellular segment spans residues 223 to 241; that stretch reads WSLIIGYGIEVFSYNQYEW. The helical transmembrane segment at 242 to 262 threads the bilayer; that stretch reads FWIPWLMPYVGAMLGALIYQL. Residues 263 to 281 are Cytoplasmic-facing; the sequence is LIGAQWSKGQKGESKHKDP.

This sequence belongs to the MIP/aquaporin (TC 1.A.8) family.

The protein localises to the cell membrane. It catalyses the reaction H2O(in) = H2O(out). In terms of biological role, aquaglyceroporin that may modulate the water content and osmolytes during anhydrobiosis. The chain is Aquaporin-9 from Milnesium tardigradum (Water bear).